The primary structure comprises 98 residues: Large ribosomal subunit protein bL25 (98 aa).

It belongs to the bacterial ribosomal protein bL25 family. As to quaternary structure, part of the 50S ribosomal subunit; part of the 5S rRNA/L5/L18/L25 subcomplex. Contacts the 5S rRNA. Binds to the 5S rRNA independently of L5 and L18.

This is one of the proteins that binds to the 5S RNA in the ribosome where it forms part of the central protuberance. The protein is Large ribosomal subunit protein bL25 of Synechocystis sp. (strain ATCC 27184 / PCC 6803 / Kazusa).